Reading from the N-terminus, the 439-residue chain is D-inositol 3-phosphate glycosyltransferase (439 aa).

Position 21 (His21) interacts with 1D-myo-inositol 3-phosphate. UDP-N-acetyl-alpha-D-glucosamine contacts are provided by residues 27 to 28 (QP) and Gly35. 1D-myo-inositol 3-phosphate contacts are provided by residues 32-37 (DAGGMN), Lys90, Tyr123, Thr147, and Arg167. Positions 241, 246, and 299 each coordinate UDP-N-acetyl-alpha-D-glucosamine. Residues Tyr308, Arg309, and Ala311 each contribute to the Mg(2+) site. UDP-N-acetyl-alpha-D-glucosamine-binding residues include Glu321 and Glu329. Thr335 is a Mg(2+) binding site.

This sequence belongs to the glycosyltransferase group 1 family. MshA subfamily. In terms of assembly, homodimer.

The catalysed reaction is 1D-myo-inositol 3-phosphate + UDP-N-acetyl-alpha-D-glucosamine = 1D-myo-inositol 2-acetamido-2-deoxy-alpha-D-glucopyranoside 3-phosphate + UDP + H(+). Its function is as follows. Catalyzes the transfer of a N-acetyl-glucosamine moiety to 1D-myo-inositol 3-phosphate to produce 1D-myo-inositol 2-acetamido-2-deoxy-glucopyranoside 3-phosphate in the mycothiol biosynthesis pathway. The sequence is that of D-inositol 3-phosphate glycosyltransferase from Mycobacterium sp. (strain KMS).